We begin with the raw amino-acid sequence, 337 residues long: RNA 3'-terminal phosphate cyclase (337 aa).

ATP contacts are provided by residues Gln-101 and 282-285 (HMSD). The active-site Tele-AMP-histidine intermediate is the His-306.

It belongs to the RNA 3'-terminal cyclase family. Type 1 subfamily.

Its subcellular location is the cytoplasm. It carries out the reaction a 3'-end 3'-phospho-ribonucleotide-RNA + ATP = a 3'-end 2',3'-cyclophospho-ribonucleotide-RNA + AMP + diphosphate. Functionally, catalyzes the conversion of 3'-phosphate to a 2',3'-cyclic phosphodiester at the end of RNA. The mechanism of action of the enzyme occurs in 3 steps: (A) adenylation of the enzyme by ATP; (B) transfer of adenylate to an RNA-N3'P to produce RNA-N3'PP5'A; (C) and attack of the adjacent 2'-hydroxyl on the 3'-phosphorus in the diester linkage to produce the cyclic end product. The biological role of this enzyme is unknown but it is likely to function in some aspects of cellular RNA processing. The protein is RNA 3'-terminal phosphate cyclase of Saccharolobus islandicus (strain L.S.2.15 / Lassen #1) (Sulfolobus islandicus).